Consider the following 142-residue polypeptide: Protein spalt-accessory (142 aa).

Residues 1–16 form the signal peptide; it reads MKLLIALFVLVNAVIA. Over residues 65–77 the composition is skewed to gly residues; sequence GQGGVSPGQGGFA. The tract at residues 65–142 is disordered; that stretch reads GQGGVSPGQG…HHEHHGHHRH (78 aa). The span at 112-124 shows a compositional bias: basic and acidic residues; sequence NHHEYPEHHGDHH. Positions 125-142 are enriched in basic residues; it reads REHHEHHGHHEHHGHHRH.

The protein localises to the secreted. Its function is as follows. Likely to be involved in the establishment of the head. This is Protein spalt-accessory (sala) from Drosophila orena (Fruit fly).